Reading from the N-terminus, the 197-residue chain is uncharacterized protein (197 aa).

A compositionally biased stretch (basic and acidic residues) spans 168-185; that stretch reads QRDDFSEDSHANDPKLVG. Residues 168–197 form a disordered region; the sequence is QRDDFSEDSHANDPKLVGDDYVPQAPEQIN.

This is an uncharacterized protein from Escherichia coli (strain K12).